We begin with the raw amino-acid sequence, 479 residues long: Cardiolipin synthase A (479 aa).

Transmembrane regions (helical) follow at residues 8 to 28 (LLAY…IHAV) and 38 to 58 (IAWA…YLIF). PLD phosphodiesterase domains are found at residues 218 to 245 (VNFR…GDEY) and 392 to 419 (TPGF…DNRS). Residues histidine 223, lysine 225, aspartate 230, histidine 397, lysine 399, and aspartate 404 contribute to the active site.

The protein belongs to the phospholipase D family. Cardiolipin synthase subfamily. ClsA sub-subfamily.

It localises to the cell inner membrane. The catalysed reaction is 2 a 1,2-diacyl-sn-glycero-3-phospho-(1'-sn-glycerol) = a cardiolipin + glycerol. Its function is as follows. Catalyzes the reversible phosphatidyl group transfer from one phosphatidylglycerol molecule to another to form cardiolipin (CL) (diphosphatidylglycerol) and glycerol. The protein is Cardiolipin synthase A of Pseudomonas fluorescens (strain SBW25).